We begin with the raw amino-acid sequence, 688 residues long: Complement C1s-1 subcomponent (688 aa).

Positions 1 to 15 are cleaved as a signal peptide; sequence MWCLVLFSLLASFSA. Residues 16–130 form the CUB 1 domain; sequence EPTMHGEILS…TGFAAYYTAI (115 aa). Ca(2+) is bound by residues E60, D68, D113, D131, I132, and E134. C65 and C83 are joined by a disulfide. Residues 131–172 form the EGF-like; calcium-binding domain; sequence DINECTDFTDVPCSHFCNNFIGGYFCSCPPEYFLHDDMRNCG. 3 cysteine pairs are disulfide-bonded: C135–C147, C143–C156, and C158–C171. Residues N149, F150, and G153 each contribute to the Ca(2+) site. At N149 the chain carries (3R)-3-hydroxyasparagine. N-linked (GlcNAc...) asparagine glycosylation is present at N174. C175 and C202 are oxidised to a cystine. In terms of domain architecture, CUB 2 spans 175-290; that stretch reads CSGDVFTALI…KGWKLRYHGD (116 aa). Ca(2+)-binding residues include E226, D236, D275, G278, and Q279. Cysteines 234 and 251 form a disulfide. 2 Sushi domains span residues 292-356 and 357-423; these read ISCA…KCQP and VYCG…RCIP. Cystine bridges form between C294-C341, C321-C354, C359-C403, C386-C421, C425-C549, C595-C618, and C627-C659. The Peptidase S1 domain maps to 438–680; sequence IFGGQPAKIE…YVDWILKTMQ (243 aa). Residues H475 and D529 each act as charge relay system in the active site. S631 functions as the Charge relay system in the catalytic mechanism. N641 carries an N-linked (GlcNAc...) asparagine glycan.

It belongs to the peptidase S1 family. In terms of assembly, core component of the complement C1 complex, a calcium-dependent complex composed of 1 molecule of the C1Q subcomplex, 2 molecules of C1R and 2 molecules of C1S. The C1Q subcomplex is composed 18 subunits: 3 chains of C1QA, C1QB, and C1QC trimerize to form 6 collagen-like triple helices connected to six globular ligand-recognition modules. In terms of processing, cleaved and activated by C1R to generate Complement C1s subcomponent heavy and light chains. Post-translationally, the iron and 2-oxoglutarate dependent 3-hydroxylation of aspartate and asparagine is (R) stereospecific within EGF domains. In terms of tissue distribution, predominantly expressed in liver.

It is found in the secreted. The protein resides in the cell surface. It carries out the reaction Cleavage of Arg-|-Ala bond in complement component C4 to form C4a and C4b, and Lys(or Arg)-|-Lys bond in complement component C2 to form C2a and C2b: the 'classical' pathway C3 convertase.. With respect to regulation, cleaved and activated by C1R. Immunoglobulin-binding promotes autoactivation of C1R, which results in the cleavage of the Arg-Ile bond in the catalytic domain. Inhibited by C1 inhibitor (SERPING1). Its function is as follows. Component of the complement C1 complex, a multiprotein complex that initiates the classical pathway of the complement system, a cascade of proteins that leads to phagocytosis and breakdown of pathogens and signaling that strengthens the adaptive immune system. C1S is activated following association of the C1 complex with immunoglobulins (IgG or IgM) complexed with antigens to form antigen-antibody complexes on the surface of pathogens. C1S is cleaved and activated by C1R to generate C1s subcomponent heavy and light chains. C1s subcomponent light chain then cleaves and activates C2 and C4, the next components of the classical complement pathway. In terms of biological role, serine protease component of the complement C1 complex, which catalyzes cleavage and activation of C2 and C4, the next components of the classical complement pathway. Also cleaves IGFBP5 and thereby inhibits the trophic effects of IGF1. The protein is Complement C1s-1 subcomponent of Mus musculus (Mouse).